Consider the following 101-residue polypeptide: Apolipoprotein C-II (101 aa).

A signal peptide spans 1–22 (MGTRYFLVGFLILLVLGFEVQG). The lipid binding stretch occupies residues 66–74 (AVDEKIRDI). The tract at residues 78–101 (STAAVTTYAGIITDQVFSVLSGKD) is lipoprotein lipase cofactor.

Belongs to the apolipoprotein C2 family. In terms of processing, proapolipoprotein C-II is synthesized as a sialic acid containing glycoprotein which is subsequently desialylated prior to its proteolytic processing. Proapolipoprotein C-II undergoes proteolytic cleavage of its N-terminal hexapeptide to generate apolipoprotein C-II. In bovine, proapolipoprotein C-II was found to be the minor form whereas apolipoprotein C-II was found to be the major form in plasma.

The protein localises to the secreted. Its function is as follows. Component of chylomicrons, very low-density lipoproteins (VLDL), low-density lipoproteins (LDL), and high-density lipoproteins (HDL) in plasma. Plays an important role in lipoprotein metabolism as an activator of lipoprotein lipase. Both proapolipoprotein C-II and apolipoprotein C-II can activate lipoprotein lipase. This chain is Apolipoprotein C-II (APOC2), found in Bos taurus (Bovine).